The following is a 277-amino-acid chain: Large ribosomal subunit protein uL2 (277 aa).

2 disordered regions span residues 24–55 and 221–277; these read ITTSTPEKSLLRPLKKKAGRNNQGKLTVRHHG and RGSV…RKKK.

This sequence belongs to the universal ribosomal protein uL2 family. As to quaternary structure, part of the 50S ribosomal subunit. Forms a bridge to the 30S subunit in the 70S ribosome.

One of the primary rRNA binding proteins. Required for association of the 30S and 50S subunits to form the 70S ribosome, for tRNA binding and peptide bond formation. It has been suggested to have peptidyltransferase activity; this is somewhat controversial. Makes several contacts with the 16S rRNA in the 70S ribosome. The protein is Large ribosomal subunit protein uL2 of Listeria welshimeri serovar 6b (strain ATCC 35897 / DSM 20650 / CCUG 15529 / CIP 8149 / NCTC 11857 / SLCC 5334 / V8).